The following is a 901-amino-acid chain: Protein translocase subunit SecA (901 aa).

Residues glutamine 87, 105 to 109 (GEGKT), and aspartate 512 each bind ATP. 4 residues coordinate Zn(2+): cysteine 885, cysteine 887, cysteine 896, and histidine 897.

Belongs to the SecA family. Monomer and homodimer. Part of the essential Sec protein translocation apparatus which comprises SecA, SecYEG and auxiliary proteins SecDF-YajC and YidC. Requires Zn(2+) as cofactor.

It is found in the cell inner membrane. Its subcellular location is the cytoplasm. It catalyses the reaction ATP + H2O + cellular proteinSide 1 = ADP + phosphate + cellular proteinSide 2.. Its function is as follows. Part of the Sec protein translocase complex. Interacts with the SecYEG preprotein conducting channel. Has a central role in coupling the hydrolysis of ATP to the transfer of proteins into and across the cell membrane, serving both as a receptor for the preprotein-SecB complex and as an ATP-driven molecular motor driving the stepwise translocation of polypeptide chains across the membrane. The sequence is that of Protein translocase subunit SecA from Salmonella typhi.